The primary structure comprises 430 residues: Pre-B-cell leukemia transcription factor 2 (430 aa).

A disordered region spans residues 1-52; that stretch reads MDERLLGPPPPGGGRGGLGLVGAEPGGPGEPPGGGDPGGGSGGVPGGRGKQD. The span at 13–48 shows a compositional bias: gly residues; that stretch reads GGRGGLGLVGAEPGGPGEPPGGGDPGGGSGGVPGGR. The PBC domain maps to 48 to 243; the sequence is RGKQDIGDIL…VMILRSRFLD (196 aa). Residues 55–134 are PBC-A; that stretch reads DILQQIMTIT…EGVAGPEKGG (80 aa). A phosphoserine mark is found at Ser-136, Ser-151, and Ser-159. The PBC-B stretch occupies residues 137 to 243; it reads AAAAAAAAAS…VMILRSRFLD (107 aa). The segment at residues 244 to 306 is a DNA-binding region (homeobox; TALE-type); that stretch reads ARRKRRNFSK…NKRIRYKKNI (63 aa). Disordered stretches follow at residues 327–347 and 375–430; these read GGHS…GGSF and LRHS…DTSN. A phosphoserine mark is found at Ser-330 and Ser-395. The span at 409-418 shows a compositional bias: polar residues; that stretch reads VTPSSVTSPT.

The protein belongs to the TALE/PBX homeobox family. In terms of assembly, forms heterodimers with MEIS1 and heterotrimers with MEIS1 and HOXA9. Interacts with PBXIP1.

Its subcellular location is the nucleus. Its function is as follows. Transcriptional activator that binds the sequence 5'-ATCAATCAA-3'. Activates transcription of PF4 in complex with MEIS1. The polypeptide is Pre-B-cell leukemia transcription factor 2 (Pbx2) (Mus musculus (Mouse)).